We begin with the raw amino-acid sequence, 692 residues long: Junctophilin-2 (692 aa).

Topologically, residues Met1–Thr670 are cytoplasmic. MORN repeat units lie at residues Tyr14 to Gly36, Tyr38 to Thr59, Phe60 to Arg79, Tyr82 to Ala104, Tyr106 to Thr128, and Tyr129 to Met151. 2 positions are modified to phosphoserine: Ser162 and Ser165. 2 disordered regions span residues Ser164 to Pro190 and Leu246 to Phe273. 2 MORN repeats span residues Tyr285–Arg307 and Tyr308–Arg330. A Bipartite nuclear localization signal motif is present at residues Lys345 to Lys359. Residues Asn439–Glu661 form a disordered region. 3 positions are modified to phosphoserine: Ser440, Ser442, and Ser462. A compositionally biased stretch (basic and acidic residues) spans Glu457–Pro471. Thr470 bears the Phosphothreonine mark. Residues Glu474 to Pro487 are compositionally biased toward pro residues. Ser479 carries the phosphoserine modification. The residue at position 483 (Thr483) is a Phosphothreonine. The short motif at Lys488–Pro492 is the Nuclear localization signal element. 2 positions are modified to phosphoserine: Ser527 and Ser533. The span at Pro573–Pro582 shows a compositional bias: acidic residues. A phosphoserine mark is found at Ser589, Ser593, Ser604, and Ser609. Over residues Ala627–Gly640 the composition is skewed to basic and acidic residues. Residues Val671–Leu691 form a helical; Anchor for type IV membrane protein membrane-spanning segment.

It belongs to the junctophilin family. In terms of assembly, interacts with TRPC3. Interacts with BAG5 and HSPA8; the interaction with HSPA8 is increased in the presence of BAG5. Junctophilin-2 N-terminal fragment: Interacts with MEF2C. Post-translationally, proteolytically cleaved by calpain in response to cardiac stress. The major cleavage site takes place at the C-terminus and leads to the release of the Junctophilin-2 N-terminal fragment chain (JP2NT). Phosphorylation on Ser-165, probably by PKC, affects RYR1-mediated calcium ion release, interaction with TRPC3, and skeletal muscle myotubule development.

It is found in the cell membrane. The protein resides in the sarcoplasmic reticulum membrane. Its subcellular location is the endoplasmic reticulum membrane. The protein localises to the nucleus. Its function is as follows. Membrane-binding protein that provides a structural bridge between the plasma membrane and the sarcoplasmic reticulum and is required for normal excitation-contraction coupling in cardiomyocytes. Provides a structural foundation for functional cross-talk between the cell surface and intracellular Ca(2+) release channels by maintaining the 12-15 nm gap between the sarcolemma and the sarcoplasmic reticulum membranes in the cardiac dyads. Necessary for proper intracellular Ca(2+) signaling in cardiac myocytes via its involvement in ryanodine receptor-mediated calcium ion release. Contributes to the construction of skeletal muscle triad junctions. Transcription repressor required to safeguard against the deleterious effects of cardiac stress. Generated following cleavage of the Junctophilin-2 chain by calpain in response to cardiac stress in cardiomyocytes. Following cleavage and release from the membrane, translocates to the nucleus, binds DNA and represses expression of genes implicated in cell growth and differentiation, hypertrophy, inflammation and fibrosis. Modifies the transcription profile and thereby attenuates pathological remodeling in response to cardiac stress. Probably acts by competing with MEF2 transcription factors and TATA-binding proteins. The chain is Junctophilin-2 from Rattus norvegicus (Rat).